Reading from the N-terminus, the 1372-residue chain is DNA-directed RNA polymerase subunit beta (1372 aa).

It belongs to the RNA polymerase beta chain family. As to quaternary structure, the RNAP catalytic core consists of 2 alpha, 1 beta, 1 beta' and 1 omega subunit. When a sigma factor is associated with the core the holoenzyme is formed, which can initiate transcription.

The enzyme catalyses RNA(n) + a ribonucleoside 5'-triphosphate = RNA(n+1) + diphosphate. In terms of biological role, DNA-dependent RNA polymerase catalyzes the transcription of DNA into RNA using the four ribonucleoside triphosphates as substrates. This chain is DNA-directed RNA polymerase subunit beta, found in Bradyrhizobium diazoefficiens (strain JCM 10833 / BCRC 13528 / IAM 13628 / NBRC 14792 / USDA 110).